We begin with the raw amino-acid sequence, 541 residues long: Protein wntless homolog B (541 aa).

Residues 1–15 are Cytoplasmic-facing; that stretch reads MAGAIIENMSTKKLC. A helical membrane pass occupies residues 16-36; that stretch reads MVGVALLLLQVLAFLVGGLIA. Residues 37–232 lie on the Lumenal side of the membrane; the sequence is PKPTTYVNPV…SIFQNGGFTM (196 aa). A helical transmembrane segment spans residues 233 to 253; the sequence is VWFAMKTFLTPCIIIIMIWYW. Residues 254–268 lie on the Cytoplasmic side of the membrane; the sequence is RRITMMTRSPVLLEK. The chain crosses the membrane as a helical span at residues 269 to 289; the sequence is VIFALGISMTFINIPVEWFSI. Topologically, residues 290–303 are lumenal; the sequence is GYDWTWMLLFGDIR. Residues 304–324 traverse the membrane as a helical segment; it reads QGIFYAMLLSFWIIFCGEHMM. Topologically, residues 325 to 331 are cytoplasmic; sequence DQAERNR. Residues 332–352 form a helical membrane-spanning segment; that stretch reads ISIYWKQVGPIAFGSCCLFIF. The Lumenal portion of the chain corresponds to 353 to 379; sequence DMCERGVQLKNPFYSIWTTDVGAEIAM. Residues 380-400 form a helical membrane-spanning segment; it reads AFIIVAGICACLYFLFLCFMV. Topologically, residues 401–431 are cytoplasmic; the sequence is YQVFRNISGKRSNLPAMSKARRLHYEGLIFR. Residues 432–452 form a helical membrane-spanning segment; it reads FKFLMIITLACAALTVVFFIT. Residues 453-471 lie on the Lumenal side of the membrane; that stretch reads TQITEGNWKLGDLSIELNS. A helical transmembrane segment spans residues 472 to 492; sequence AFFTGIYGMWNLYVFALMFLY. Over 493–541 the chain is Cytoplasmic; the sequence is APSHKHYGDGQSNDGAGMSSGEELQLTTTITHIDGPTELYRLAGKEAQE.

The protein belongs to the wntless family. Enriched in the animal hemisphere of the early cleavage embryo, where expression persists until the late gastrula stage. At the neurula stage, strongly expressed at the border of the neural plate and dorsal midline. After the neurula stage, expressed in various organs, including the eye, liver, heart, pronephros, otic vesicle, and dorsal neural tube. Expression in the developing eye is dynamic; expressed in the eye field from stages 23 to 27, and from stage 30 expression is confined to distinct regions including the central part and border of the eye.

It is found in the golgi apparatus membrane. Its subcellular location is the cytoplasmic vesicle membrane. Its function is as follows. Required for a subset of Wnt-dependent developmental processes, in particular, eye and pronephros development. Regulates the secretion of wnt4, which is required for eye development. The polypeptide is Protein wntless homolog B (wls-b) (Xenopus laevis (African clawed frog)).